The chain runs to 216 residues: Ras-related protein Rab-2B (216 aa).

Gly16, Val17, Gly18, Lys19, Ser20, Cys21, and Thr38 together coordinate GTP. Ser20 is a Mg(2+) binding site. The Switch 1 motif lies at 37-42 (LTIGVE). Mg(2+)-binding residues include Thr38 and Asp61. The short motif at 63 to 72 (AGQESFRSIT) is the Switch 2 element. Residues Gly64, Asn119, Lys120, Asp122, Ala150, and Lys151 each coordinate GTP. Over residues 189 to 207 (PQQSITSSVGPCSPQQNVS) the composition is skewed to polar residues. The interval 189–216 (PQQSITSSVGPCSPQQNVSDIGPDSGCC) is disordered. Residues Cys215 and Cys216 are each lipidated (S-geranylgeranyl cysteine).

It belongs to the small GTPase superfamily. Rab family. Interacts (in GTP-bound form) with GARIN4 (via N-terminus). Interacts (in GTP-bound form) with GARIN5A. Interacts (in GTP-bound form) with GARIN1B. Interacts with VPS39 and VPS41. Requires Mg(2+) as cofactor.

The protein resides in the cell membrane. The protein localises to the endoplasmic reticulum membrane. Its subcellular location is the golgi apparatus membrane. It localises to the cytoplasmic vesicle. It is found in the secretory vesicle. The protein resides in the acrosome. The protein localises to the autophagosome membrane. The catalysed reaction is GTP + H2O = GDP + phosphate + H(+). Its activity is regulated as follows. Regulated by guanine nucleotide exchange factors (GEFs) which promote the exchange of bound GDP for free GTP, GTPase activating proteins (GAPs) which increase the GTP hydrolysis activity, and GDP dissociation inhibitors (GDIs) which inhibit the dissociation of the nucleotide from the GTPase. In terms of biological role, the small GTPases Rab are key regulators of intracellular membrane trafficking, from the formation of transport vesicles to their fusion with membranes. Rabs cycle between active GTP-bound and inactive GDP-bound states. In their active state, drive transport of vesicular carriers from donor organelles to acceptor organelles to regulate the membrane traffic that maintains organelle identity and morphology. Regulates the compacted morphology of the Golgi. Promotes cytosolic DNA-induced innate immune responses. Regulates IFN responses against DNA viruses by regulating the CGAS-STING signaling axis. Together with RAB2A redundantly required for efficient autophagic flux. The protein is Ras-related protein Rab-2B (Rab2b) of Mus musculus (Mouse).